The chain runs to 336 residues: Peroxidase 11 (336 aa).

An N-terminal signal peptide occupies residues 1–20; it reads MMRLLFVFFMVHTIFIPCFS. Disulfide bonds link cysteine 39–cysteine 119, cysteine 72–cysteine 77, cysteine 125–cysteine 331, and cysteine 204–cysteine 236. Histidine 70 acts as the Proton acceptor in catalysis. Ca(2+)-binding residues include aspartate 71, valine 74, glycine 76, aspartate 78, and serine 80. Residue proline 167 participates in substrate binding. Histidine 197 contributes to the heme b binding site. Position 198 (threonine 198) interacts with Ca(2+). N-linked (GlcNAc...) asparagine glycosylation is present at asparagine 246. 3 residues coordinate Ca(2+): aspartate 251, threonine 254, and aspartate 259.

It belongs to the peroxidase family. Classical plant (class III) peroxidase subfamily. It depends on heme b as a cofactor. Requires Ca(2+) as cofactor. In terms of tissue distribution, expressed in roots and stems.

Its subcellular location is the secreted. The enzyme catalyses 2 a phenolic donor + H2O2 = 2 a phenolic radical donor + 2 H2O. Functionally, removal of H(2)O(2), oxidation of toxic reductants, biosynthesis and degradation of lignin, suberization, auxin catabolism, response to environmental stresses such as wounding, pathogen attack and oxidative stress. These functions might be dependent on each isozyme/isoform in each plant tissue. In Arabidopsis thaliana (Mouse-ear cress), this protein is Peroxidase 11 (PER11).